A 675-amino-acid polypeptide reads, in one-letter code: MRPHFKTRYPQWLSCMLPLVTGCVFGAVWGSNLDSTVVLSSSTFSHSETQHHHHLAGAQHHPPSIAIYRSPASLRGGHAGATYIFGKGGGLIMYTWPNNERPSTRTDRLAVGFSTTIKDGILVRIDSAPRLGDYIMLHIEEGKVCVTFNIGTVDISVKEMTTEVNDGKYHVVRFTRNGGNATLQVDNWPINEHFPSGNSDIERFQMANKKIPFKYTRPVEDWLHEKGRQLTIFNTQATISIGGNDRKRPYQGQLSGLYYNGLKVLNMAAEGHANIKINGSVRLVGDVPTSRSPSRTTTSMPPEMSTTFIETTTTLSTTTTRKQRSPPTIQTTDDIVSSAECSSDDEDLEECDGGHTGGELVIPVLVEDPIDIPPISTRVPFIPLPPTLHPVLTIIETTKESLSIATEAGVPCFSDQGRDDCDDDDGDDDDGDGLVISGFGSGEVFDSSLPPTDDEDFYTTFSLVTDKILTTSTYEGGYKALAPKWEEKDFKPKKPSEVGRITAIPPLPDLRSSAASPVRPEPAPKIPAGKMNNREVKPQPDIVLLPLPTSFDMDGTKPKGPYITQPMLRTIPSALPTVPGIRRVPPGASEVIRESSSTTGMVVGIVSAAALCILILLYAMYKYRNRDEGSYQVDETRNYISNSAQNNGTVVKDKQPSTKGASNKRPKDKDKEYYV.

Residues 1–30 form the signal peptide; sequence MRPHFKTRYPQWLSCMLPLVTGCVFGAVWG. Residues 31–599 are Extracellular-facing; it reads SNLDSTVVLS…EVIRESSSTT (569 aa). The Laminin G-like domain maps to 81-281; the sequence is ATYIFGKGGG…HANIKINGSV (201 aa). 2 disordered regions span residues 313-337 and 490-534; these read TTLSTTTTRKQRSPPTIQTTDDIVS and FKPK…MNNR. Polar residues predominate over residues 325–335; the sequence is SPPTIQTTDDI. Residues 600–620 form a helical membrane-spanning segment; it reads GMVVGIVSAAALCILILLYAM. At 621-675 the chain is on the cytoplasmic side; it reads YKYRNRDEGSYQVDETRNYISNSAQNNGTVVKDKQPSTKGASNKRPKDKDKEYYV. Residues 642–675 form a disordered region; sequence NSAQNNGTVVKDKQPSTKGASNKRPKDKDKEYYV. Basic and acidic residues predominate over residues 665–675; it reads RPKDKDKEYYV.

Belongs to the neurexin family. Processed by alpha-secretase leading to the formation of an extracellular soluble protein as well as a C-terminal membrane-embedded fragment (CTF). Proteolysis of these CTFs by gamma-secretase releases intracellular domains (ICDs) and extracellular peptides.

The protein resides in the membrane. Its function is as follows. Neuronal cell surface protein that may be involved in cell recognition and cell adhesion. This Danio rerio (Zebrafish) protein is Neurexin-3b-beta (nrxn3b).